A 571-amino-acid chain; its full sequence is Cytosolic Fe-S cluster assembly factor NAR1 (571 aa).

Cysteine 20, cysteine 62, cysteine 65, cysteine 68, cysteine 204, and cysteine 259 together coordinate [4Fe-4S] cluster. The tract at residues 415 to 437 (AKPSRMPGGKPIGSARRPNGKAS) is disordered. The [4Fe-4S] cluster site is built by cysteine 449 and cysteine 453.

This sequence belongs to the NARF family.

Component of the cytosolic Fe/S protein assembly machinery. Required for maturation of extramitochondrial Fe/S proteins. May play a role in the transfer of pre-assembled Fe/S clusters to target apoproteins. In Sclerotinia sclerotiorum (strain ATCC 18683 / 1980 / Ss-1) (White mold), this protein is Cytosolic Fe-S cluster assembly factor NAR1 (NAR1).